A 297-amino-acid polypeptide reads, in one-letter code: Putative thiosulfate sulfurtransferase SseA (297 aa).

Rhodanese domains lie at 31–138 (GAPG…ETTL) and 168–286 (ILDA…VPIV). Residue C245 is the Cysteine persulfide intermediate of the active site. R250 serves as a coordination point for substrate.

The catalysed reaction is thiosulfate + hydrogen cyanide = thiocyanate + sulfite + 2 H(+). The chain is Putative thiosulfate sulfurtransferase SseA (sseA) from Mycobacterium bovis (strain ATCC BAA-935 / AF2122/97).